The sequence spans 64 residues: Purotoxin-2 (64 aa).

Residues 1-44 (AKACTPLLHDCSHDRHSCCRGDMFKYVCDCFYPEGEDKTEVCSC) are knottin domain. 4 disulfides stabilise this stretch: Cys-4–Cys-19, Cys-11–Cys-28, Cys-18–Cys-44, and Cys-30–Cys-42. Residues 45–64 (QQPKSHKIAEKIIDKAKTTL) form a linear cationic cytotoxin domain region. Leu-64 carries the leucine amide modification.

This sequence belongs to the neurotoxin 19 (CSTX) family. 05 (U4-Lctx) subfamily. In terms of processing, amidation at Leu-64 is not mandatory for activity on P2RX3. Expressed by the venom gland.

The protein resides in the secreted. Its function is as follows. Enhances the high-affinity desensitization of human P2RX3 purinoceptors. At 50 nM, the toxin decreases the IC(50) for ambient ATP from 2.67 nM to 0.77 nM in human P2RX3. In Alopecosa marikovskyi (Wolf spider), this protein is Purotoxin-2.